Reading from the N-terminus, the 388-residue chain is Xylose isomerase (388 aa).

Residues His54 and Asp57 contribute to the active site. Residues Glu181, Glu217, His220, Asp245, Asp255, Asp257, and Asp287 each contribute to the Mg(2+) site.

This sequence belongs to the xylose isomerase family. In terms of assembly, homotetramer. Mg(2+) is required as a cofactor.

Its subcellular location is the cytoplasm. It carries out the reaction alpha-D-xylose = alpha-D-xylulofuranose. In terms of biological role, involved in D-xylose catabolism. This is Xylose isomerase (xylA) from Streptomyces rubiginosus.